The primary structure comprises 347 residues: MSYKIVALPGDGIGPEILSGTLELLKLISEKYHFEYHLESHHFGGVSIDYYGTPLTNETLQSCKNADAILLGAIGGPKWTDPNNRPEHGLLKLRKSLNLFANIRPTFVTKGASHLSPLKQDIVEGTDLVIVRELTSGIYFGEPSYVKKTEALDSLKYSSQEIERIVRIAFNLANRRRKKLTSVDKENVLSSSKLWRQIVNDVKKDYPEVEVNHMLVDACSMHLITQPTQFDVIVTENLFGDILSDEASVIPGSLGLSPSASFGQTGTRLYEPIHGSAPDIANEDKANPFGMVLSLALCLRESLNQNDAANELESIVYSFIQSNKTTADLGGQYRTSEIFKLLKEKYL.

Residue 76 to 87 (GPKWTDPNNRPE) participates in NAD(+) binding. R94, R104, R132, and D217 together coordinate substrate. D217, D241, and D245 together coordinate Mg(2+). 275–287 (GSAPDIANEDKAN) is a binding site for NAD(+).

The protein belongs to the isocitrate and isopropylmalate dehydrogenases family. LeuB type 1 subfamily. Homodimer. It depends on Mg(2+) as a cofactor. Mn(2+) serves as cofactor.

Its subcellular location is the cytoplasm. It carries out the reaction (2R,3S)-3-isopropylmalate + NAD(+) = 4-methyl-2-oxopentanoate + CO2 + NADH. Its pathway is amino-acid biosynthesis; L-leucine biosynthesis; L-leucine from 3-methyl-2-oxobutanoate: step 3/4. Its function is as follows. Catalyzes the oxidation of 3-carboxy-2-hydroxy-4-methylpentanoate (3-isopropylmalate) to 3-carboxy-4-methyl-2-oxopentanoate. The product decarboxylates to 4-methyl-2 oxopentanoate. The protein is 3-isopropylmalate dehydrogenase of Staphylococcus epidermidis (strain ATCC 35984 / DSM 28319 / BCRC 17069 / CCUG 31568 / BM 3577 / RP62A).